Reading from the N-terminus, the 178-residue chain is MIKSTGALLLFAALSAGQAIASDVAFRGNLLDRPCHVSGDSLNKHVVFKTRASRDFWYPPGRSPTESFVIRLENCHATAVGKIVTLTFKGTEEAALPGHLKVTGVNAGRLGIALLDTDGSSLLKPGTSHNKGQGEKVTGNSLELPFGAYVVATPEALRTKSVVPGDYEATATFELTYR.

The N-terminal stretch at 1-21 (MIKSTGALLLFAALSAGQAIA) is a signal peptide.

It localises to the secreted. It is found in the fimbrium. Adapter that links the pilus rod to the base of the tip fibrillum. Regulates the length of the tip fibrillum and joins it to the pilus rod. Pili are polar filaments radiating from the surface of the bacterium to a length of 0.5-1.5 micrometers and numbering 100-300 per cell, and enable bacteria to colonize the epithelium of specific host organs. The protein is Fimbrial adapter PapK (papK) of Escherichia coli O6:H1 (strain CFT073 / ATCC 700928 / UPEC).